A 1068-amino-acid polypeptide reads, in one-letter code: Carbamoyl phosphate synthase large chain (1068 aa).

The interval 1–401 is carboxyphosphate synthetic domain; sequence MPLNKDIKKV…AFLKGIRSLE (401 aa). ATP contacts are provided by Arg129, Arg169, Gly175, Gly176, Lys208, Val210, Glu215, Gly241, Ile242, His243, Gln284, and Glu298. Residues 133-327 enclose the ATP-grasp 1 domain; it reads RNVMSRINEP…IAKVAAKIAL (195 aa). Mg(2+)-binding residues include Gln284, Glu298, and Asn300. 3 residues coordinate Mn(2+): Gln284, Glu298, and Asn300. Residues 402–549 form an oligomerization domain region; it reads IGKYSLEHKK…YSTYDVYDEV (148 aa). Residues 550-932 are carbamoyl phosphate synthetic domain; it reads EVSKNKKVIV…ALYKGFIGAN (383 aa). Positions 674–864 constitute an ATP-grasp 2 domain; that stretch reads DELLEKLQIS…IVDIATRVML (191 aa). The ATP site is built by Arg710, Lys749, Leu751, Glu755, Gly780, Val781, His782, Ser783, Gln823, and Glu835. Mg(2+)-binding residues include Gln823, Glu835, and Asn837. Gln823, Glu835, and Asn837 together coordinate Mn(2+). Residues 933–1068 form the MGS-like domain; it reads MSIKKEKGTI…ETLHIFDLSN (136 aa). Residues 933–1068 form an allosteric domain region; it reads MSIKKEKGTI…ETLHIFDLSN (136 aa).

It belongs to the CarB family. As to quaternary structure, composed of two chains; the small (or glutamine) chain promotes the hydrolysis of glutamine to ammonia, which is used by the large (or ammonia) chain to synthesize carbamoyl phosphate. Tetramer of heterodimers (alpha,beta)4. Mg(2+) serves as cofactor. Mn(2+) is required as a cofactor.

The enzyme catalyses hydrogencarbonate + L-glutamine + 2 ATP + H2O = carbamoyl phosphate + L-glutamate + 2 ADP + phosphate + 2 H(+). It catalyses the reaction hydrogencarbonate + NH4(+) + 2 ATP = carbamoyl phosphate + 2 ADP + phosphate + 2 H(+). It functions in the pathway amino-acid biosynthesis; L-arginine biosynthesis; carbamoyl phosphate from bicarbonate: step 1/1. Its pathway is pyrimidine metabolism; UMP biosynthesis via de novo pathway; (S)-dihydroorotate from bicarbonate: step 1/3. Functionally, large subunit of the glutamine-dependent carbamoyl phosphate synthetase (CPSase). CPSase catalyzes the formation of carbamoyl phosphate from the ammonia moiety of glutamine, carbonate, and phosphate donated by ATP, constituting the first step of 2 biosynthetic pathways, one leading to arginine and/or urea and the other to pyrimidine nucleotides. The large subunit (synthetase) binds the substrates ammonia (free or transferred from glutamine from the small subunit), hydrogencarbonate and ATP and carries out an ATP-coupled ligase reaction, activating hydrogencarbonate by forming carboxy phosphate which reacts with ammonia to form carbamoyl phosphate. In Clostridium botulinum (strain Loch Maree / Type A3), this protein is Carbamoyl phosphate synthase large chain.